Reading from the N-terminus, the 360-residue chain is Photosystem II protein D1 (360 aa).

3 helical membrane passes run 29-46 (YIGW…TATS), 118-133 (HFLL…EWEL), and 142-156 (WIFV…AASA). Histidine 118 contacts chlorophyll a. A pheophytin a-binding site is contributed by tyrosine 126. Aspartate 170 and glutamate 189 together coordinate [CaMn4O5] cluster. A helical membrane pass occupies residues 197 to 218 (FHMAGVAGVFGGSLFSAMHGSL). Histidine 198 provides a ligand contact to chlorophyll a. A quinone is bound by residues histidine 215 and 264–265 (SF). Histidine 215 is a binding site for Fe cation. Histidine 272 lines the Fe cation pocket. The helical transmembrane segment at 274-288 (FLAAWPVVGIWLTAL) threads the bilayer. Positions 332, 333, 342, and 344 each coordinate [CaMn4O5] cluster. Positions 345 to 360 (SNEVLPVAVNAPAVNG) are excised as a propeptide.

It belongs to the reaction center PufL/M/PsbA/D family. In terms of assembly, PSII is composed of 1 copy each of membrane proteins PsbA, PsbB, PsbC, PsbD, PsbE, PsbF, PsbH, PsbI, PsbJ, PsbK, PsbL, PsbM, PsbT, PsbX, PsbY, PsbZ, Psb30/Ycf12, at least 3 peripheral proteins of the oxygen-evolving complex and a large number of cofactors. It forms dimeric complexes. It depends on The D1/D2 heterodimer binds P680, chlorophylls that are the primary electron donor of PSII, and subsequent electron acceptors. It shares a non-heme iron and each subunit binds pheophytin, quinone, additional chlorophylls, carotenoids and lipids. D1 provides most of the ligands for the Mn4-Ca-O5 cluster of the oxygen-evolving complex (OEC). There is also a Cl(-1) ion associated with D1 and D2, which is required for oxygen evolution. The PSII complex binds additional chlorophylls, carotenoids and specific lipids. as a cofactor. Post-translationally, tyr-161 forms a radical intermediate that is referred to as redox-active TyrZ, YZ or Y-Z. C-terminally processed by CTPA; processing is essential to allow assembly of the oxygen-evolving complex and thus photosynthetic growth.

Its subcellular location is the plastid. It localises to the chloroplast thylakoid membrane. The catalysed reaction is 2 a plastoquinone + 4 hnu + 2 H2O = 2 a plastoquinol + O2. Photosystem II (PSII) is a light-driven water:plastoquinone oxidoreductase that uses light energy to abstract electrons from H(2)O, generating O(2) and a proton gradient subsequently used for ATP formation. It consists of a core antenna complex that captures photons, and an electron transfer chain that converts photonic excitation into a charge separation. The D1/D2 (PsbA/PsbD) reaction center heterodimer binds P680, the primary electron donor of PSII as well as several subsequent electron acceptors. This is Photosystem II protein D1 from Heterosigma akashiwo (Chromophytic alga).